The sequence spans 87 residues: Small ribosomal subunit protein bS20 (87 aa).

The segment at M1 to S26 is disordered.

It belongs to the bacterial ribosomal protein bS20 family.

Its function is as follows. Binds directly to 16S ribosomal RNA. The chain is Small ribosomal subunit protein bS20 from Klebsiella pneumoniae (strain 342).